A 352-amino-acid chain; its full sequence is Protein Wnt-3a (352 aa).

An N-terminal signal peptide occupies residues 1-18 (MAPLGYLLVLCSLKQALG). Cystine bridges form between Cys77–Cys88, Cys128–Cys136, Cys138–Cys155, Cys203–Cys217, Cys205–Cys212, Cys281–Cys312, Cys297–Cys307, Cys311–Cys351, Cys327–Cys342, Cys329–Cys339, and Cys334–Cys335. N-linked (GlcNAc...) asparagine glycosylation occurs at Asn87. Residue Ser209 is the site of O-palmitoleoyl serine; by PORCN attachment. Asn298 is a glycosylation site (N-linked (GlcNAc...) asparagine).

The protein belongs to the Wnt family. In terms of assembly, forms a soluble 1:1 complex with AFM; this prevents oligomerization and is required for prolonged biological activity. The complex with AFM may represent the physiological form in body fluids. Homooligomer; disulfide-linked, leading to inactivation. Interacts with APCDD1 and WLS. Component of the Wnt-Fzd-LRP5-LRP6 signaling complex that contains a WNT protein, a FZD protein and LRP5 or LRP6. Interacts directly in the complex with LRP6. Interacts with PORCN. Interacts with glypican GPC3. Interacts with PKD1 (via extracellular domain). Interacts with FZD5. Post-translationally, proteolytic processing by TIKI1 and TIKI2 promotes oxidation and formation of large disulfide-bond oligomers, leading to inactivation of WNT3A. Disulfide bonds have critical and distinct roles in secretion and activity. Loss of each conserved cysteine in WNT3A results in high molecular weight oxidized Wnt oligomers, which are formed through inter-Wnt disulfide bonding. In terms of processing, palmitoleoylation by PORCN is required for efficient binding to frizzled receptors. Palmitoleoylation is required for proper trafficking to cell surface, vacuolar acidification is critical to release palmitoleoylated WNT3A from WLS in secretory vesicles. Depalmitoleoylated by NOTUM, leading to inhibit Wnt signaling pathway, possibly by promoting disulfide bond formation and oligomerization. As to expression, dorsal portion of the neural tube (developing roof plate), and mesenchyme tissue surrounding the umbilical veins.

It localises to the secreted. The protein localises to the extracellular space. It is found in the extracellular matrix. Ligand for members of the frizzled family of seven transmembrane receptors. Functions in the canonical Wnt signaling pathway that results in activation of transcription factors of the TCF/LEF family. Required for normal embryonic mesoderm development and formation of caudal somites. Required for normal morphogenesis of the developing neural tube. Mediates self-renewal of the stem cells at the bottom on intestinal crypts (in vitro). In Mus musculus (Mouse), this protein is Protein Wnt-3a (Wnt3a).